We begin with the raw amino-acid sequence, 334 residues long: Phosphoribosylformylglycinamidine cyclo-ligase (334 aa).

It belongs to the AIR synthase family.

The protein localises to the cytoplasm. It catalyses the reaction 2-formamido-N(1)-(5-O-phospho-beta-D-ribosyl)acetamidine + ATP = 5-amino-1-(5-phospho-beta-D-ribosyl)imidazole + ADP + phosphate + H(+). Its pathway is purine metabolism; IMP biosynthesis via de novo pathway; 5-amino-1-(5-phospho-D-ribosyl)imidazole from N(2)-formyl-N(1)-(5-phospho-D-ribosyl)glycinamide: step 2/2. This chain is Phosphoribosylformylglycinamidine cyclo-ligase, found in Pyrococcus abyssi (strain GE5 / Orsay).